We begin with the raw amino-acid sequence, 195 residues long: Flavin-dependent monooxygenase, reductase subunit HsaB (195 aa).

FAD-binding positions include 42–46, 48–49, 63–65, 69–70, and 95–96; these read PVGFA, QS, CPT, RS, and RF. Residue 160-163 participates in NAD(+) binding; it reads FYRG.

Belongs to the non-flavoprotein flavin reductase family. As to quaternary structure, hsaAB monooxygenase consists of an oxygenase component HsaA and a reductase component HsaB.

The catalysed reaction is a reduced flavin + NAD(+) = an oxidized flavin + NADH + 2 H(+). It functions in the pathway lipid metabolism; steroid biosynthesis. Its function is as follows. Catalyzes the reduction of free flavins (FMN or FAD) by NADH. Subsequently, the reduced flavins diffuse to the HsaA oxygenase subunit. In Rhodococcus jostii (strain RHA1), this protein is Flavin-dependent monooxygenase, reductase subunit HsaB (hsaB).